A 319-amino-acid polypeptide reads, in one-letter code: Nucleotide-binding protein Rru_A3448 (319 aa).

Positions 1–34 (MGRSASLLRLRDPAPLPTDIAPDPAEAPPSPAAD) are disordered. Residue 42 to 49 (GMSGAGRT) coordinates ATP. Residue 90 to 93 (DTRT) participates in GTP binding.

Belongs to the RapZ-like family.

In terms of biological role, displays ATPase and GTPase activities. This is Nucleotide-binding protein Rru_A3448 from Rhodospirillum rubrum (strain ATCC 11170 / ATH 1.1.1 / DSM 467 / LMG 4362 / NCIMB 8255 / S1).